The following is a 231-amino-acid chain: Ubiquinone biosynthesis protein coq-4, mitochondrial (231 aa).

Histidine 133, aspartate 134, histidine 137, and glutamate 149 together coordinate Zn(2+).

It belongs to the COQ4 family. As to quaternary structure, component of a multi-subunit COQ enzyme complex. It depends on Zn(2+) as a cofactor.

Its subcellular location is the mitochondrion inner membrane. It catalyses the reaction a 4-hydroxy-3-methoxy-5-(all-trans-polyprenyl)benzoate + H(+) = a 2-methoxy-6-(all-trans-polyprenyl)phenol + CO2. It participates in cofactor biosynthesis; ubiquinone biosynthesis. In terms of biological role, lyase that catalyzes the C1-decarboxylation of 4-hydroxy-3-methoxy-5-(all-trans-polyprenyl)benzoic acid into 2-methoxy-6-(all-trans-polyprenyl)phenol during ubiquinone biosynthesis. This is Ubiquinone biosynthesis protein coq-4, mitochondrial from Caenorhabditis elegans.